We begin with the raw amino-acid sequence, 133 residues long: uncharacterized protein (133 aa).

A signal peptide spans 1 to 23; it reads MSRKIIPALTIFFGPILILTAIT. Positions 82-133 are disordered; the sequence is ESIKNQNSLNKEKQQQQQQQQQQQQQQQQQQQQQQKPNTPPTPLTTPSTPKK. Positions 96 to 118 are enriched in low complexity; sequence QQQQQQQQQQQQQQQQQQQQQKP.

The protein resides in the secreted. This is an uncharacterized protein from Dictyostelium discoideum (Social amoeba).